A 325-amino-acid polypeptide reads, in one-letter code: Transaldolase (325 aa).

The active-site Schiff-base intermediate with substrate is Lys-125.

This sequence belongs to the transaldolase family. Type 2 subfamily.

Its subcellular location is the cytoplasm. It carries out the reaction D-sedoheptulose 7-phosphate + D-glyceraldehyde 3-phosphate = D-erythrose 4-phosphate + beta-D-fructose 6-phosphate. It functions in the pathway carbohydrate degradation; pentose phosphate pathway; D-glyceraldehyde 3-phosphate and beta-D-fructose 6-phosphate from D-ribose 5-phosphate and D-xylulose 5-phosphate (non-oxidative stage): step 2/3. Its function is as follows. Transaldolase is important for the balance of metabolites in the pentose-phosphate pathway. This is Transaldolase from Campylobacter jejuni subsp. jejuni serotype O:6 (strain 81116 / NCTC 11828).